A 373-amino-acid polypeptide reads, in one-letter code: GPN-loop GTPase 1 (373 aa).

A2 is modified (N-acetylalanine). 29–34 contacts GTP; it reads GSGKTT. The short motif at 86-88 is the Gly-Pro-Asn (GPN)-loop; involved in dimer interface element; that stretch reads GPN. 189–192 lines the GTP pocket; sequence NKTD. 3 positions are modified to phosphoserine: S301, S312, and S314. Residues 304 to 373 are disordered; it reads LDTGTATGSS…SMAQYWKKNK (70 aa). Position 328 is a phosphothreonine (T328). Positions 330–342 are enriched in acidic residues; sequence DEEDEEADSDTDD. S338 bears the Phosphoserine mark. Residue T340 is modified to Phosphothreonine. Over residues 343–355 the composition is skewed to basic and acidic residues; sequence IDHRVTEESREEP.

It belongs to the GPN-loop GTPase family. In terms of assembly, heterodimer with GPN3. Binds to RNA polymerase II (RNAPII). Interacts directly with RNAPII subunits RPB4 and RPB7 and the CTD of RPB1. Interacts with XPA.

The protein resides in the cytoplasm. It is found in the nucleus. Small GTPase required for proper nuclear import of RNA polymerase II (RNAPII). May act at an RNAP assembly step prior to nuclear import. Forms an interface between the RNA polymerase II enzyme and chaperone/scaffolding proteins, suggesting that it is required to connect RNA polymerase II to regulators of protein complex formation. May be involved in nuclear localization of XPA. This is GPN-loop GTPase 1 from Bos taurus (Bovine).